The chain runs to 449 residues: D-inositol 3-phosphate glycosyltransferase (449 aa).

Histidine 43 contacts 1D-myo-inositol 3-phosphate. UDP-N-acetyl-alpha-D-glucosamine is bound by residues 49–50 (QP) and glycine 57. Residues 54-59 (DAGGMN), lysine 112, tyrosine 145, threonine 169, and arginine 189 each bind 1D-myo-inositol 3-phosphate. Residues arginine 263, lysine 268, and glutamine 324 each coordinate UDP-N-acetyl-alpha-D-glucosamine. Mg(2+) is bound by residues tyrosine 333, arginine 334, and alanine 336. UDP-N-acetyl-alpha-D-glucosamine is bound by residues glutamate 346 and glutamate 354. Threonine 360 lines the Mg(2+) pocket.

Belongs to the glycosyltransferase group 1 family. MshA subfamily. Homodimer.

It carries out the reaction 1D-myo-inositol 3-phosphate + UDP-N-acetyl-alpha-D-glucosamine = 1D-myo-inositol 2-acetamido-2-deoxy-alpha-D-glucopyranoside 3-phosphate + UDP + H(+). Its function is as follows. Catalyzes the transfer of a N-acetyl-glucosamine moiety to 1D-myo-inositol 3-phosphate to produce 1D-myo-inositol 2-acetamido-2-deoxy-glucopyranoside 3-phosphate in the mycothiol biosynthesis pathway. This Segniliparus rotundus (strain ATCC BAA-972 / CDC 1076 / CIP 108378 / DSM 44985 / JCM 13578) protein is D-inositol 3-phosphate glycosyltransferase.